The sequence spans 199 residues: Recombination protein RecR (199 aa).

The C4-type zinc finger occupies 58–73; the sequence is CKICFNITDKEVCDIC. Residues 81–176 form the Toprim domain; the sequence is STICVVSHPM…KVTRIAHGIP (96 aa).

It belongs to the RecR family.

Its function is as follows. May play a role in DNA repair. It seems to be involved in an RecBC-independent recombinational process of DNA repair. It may act with RecF and RecO. The sequence is that of Recombination protein RecR from Caldanaerobacter subterraneus subsp. tengcongensis (strain DSM 15242 / JCM 11007 / NBRC 100824 / MB4) (Thermoanaerobacter tengcongensis).